A 168-amino-acid polypeptide reads, in one-letter code: ATP synthase subunit b (168 aa).

The helical transmembrane segment at 9–29 (AIPFGTIAYTLVVFLILLVML) threads the bilayer.

This sequence belongs to the ATPase B chain family. As to quaternary structure, F-type ATPases have 2 components, F(1) - the catalytic core - and F(0) - the membrane proton channel. F(1) has five subunits: alpha(3), beta(3), gamma(1), delta(1), epsilon(1). F(0) has three main subunits: a(1), b(2) and c(10-14). The alpha and beta chains form an alternating ring which encloses part of the gamma chain. F(1) is attached to F(0) by a central stalk formed by the gamma and epsilon chains, while a peripheral stalk is formed by the delta and b chains.

The protein resides in the cell membrane. F(1)F(0) ATP synthase produces ATP from ADP in the presence of a proton or sodium gradient. F-type ATPases consist of two structural domains, F(1) containing the extramembraneous catalytic core and F(0) containing the membrane proton channel, linked together by a central stalk and a peripheral stalk. During catalysis, ATP synthesis in the catalytic domain of F(1) is coupled via a rotary mechanism of the central stalk subunits to proton translocation. Its function is as follows. Component of the F(0) channel, it forms part of the peripheral stalk, linking F(1) to F(0). The polypeptide is ATP synthase subunit b (Bacillus cytotoxicus (strain DSM 22905 / CIP 110041 / 391-98 / NVH 391-98)).